A 288-amino-acid chain; its full sequence is Light-independent protochlorophyllide reductase iron-sulfur ATP-binding protein (288 aa).

Residues 12-17 and Lys-41 contribute to the ATP site; that span reads GIGKST. Ser-16 contributes to the Mg(2+) binding site. Cys-97 and Cys-131 together coordinate [4Fe-4S] cluster. 182–183 is a binding site for ATP; it reads NR.

The protein belongs to the NifH/BchL/ChlL family. In terms of assembly, homodimer. Protochlorophyllide reductase is composed of three subunits; ChlL, ChlN and ChlB. [4Fe-4S] cluster serves as cofactor.

The enzyme catalyses chlorophyllide a + oxidized 2[4Fe-4S]-[ferredoxin] + 2 ADP + 2 phosphate = protochlorophyllide a + reduced 2[4Fe-4S]-[ferredoxin] + 2 ATP + 2 H2O. Its pathway is porphyrin-containing compound metabolism; chlorophyll biosynthesis (light-independent). In terms of biological role, component of the dark-operative protochlorophyllide reductase (DPOR) that uses Mg-ATP and reduced ferredoxin to reduce ring D of protochlorophyllide (Pchlide) to form chlorophyllide a (Chlide). This reaction is light-independent. The L component serves as a unique electron donor to the NB-component of the complex, and binds Mg-ATP. In Picosynechococcus sp. (strain ATCC 27264 / PCC 7002 / PR-6) (Agmenellum quadruplicatum), this protein is Light-independent protochlorophyllide reductase iron-sulfur ATP-binding protein.